We begin with the raw amino-acid sequence, 145 residues long: Extracellular globin-2 (145 aa).

Residues 3-145 form the Globin domain; that stretch reads QCGVLEGLKV…HIEDGIKGHH (143 aa). Cys4 and Cys133 are joined by a disulfide. His96 contacts heme b.

The protein belongs to the globin family. As to quaternary structure, the extracellular hemoglobin of the earthworm consists of 12 subunits that have a hexagonal bilayer structure with a molecular weight near 3.8 million. Each one-twelfth subunit is composed primarily of disulfide linked trimers (chains A, B, and C) and monomers (chain D).

The protein is Extracellular globin-2 of Lumbricus terrestris (Common earthworm).